We begin with the raw amino-acid sequence, 85 residues long: N.vectensis toxin 6 (85 aa).

A signal peptide spans 1 to 20; the sequence is MISFKTVIVCLFLWVVIIGA. Intrachain disulfides connect C46/C82, C48/C71, and C64/C83.

Probable toxin. The protein is N.vectensis toxin 6 of Nematostella vectensis (Starlet sea anemone).